We begin with the raw amino-acid sequence, 1090 residues long: DNA damage-binding protein 1 (1090 aa).

This sequence belongs to the DDB1 family. As to quaternary structure, component of the UV-DDB complex, which is composed of DDB1 and DDB2. In terms of tissue distribution, expressed in proliferating tissues. Highly expressed in shoot apical meristem (SAM). Expressed in roots, young leaves, flag leaves, and panicles. Not detected in mature leaves.

It is found in the nucleus. Functionally, required for DNA repair. Binds to DDB2 to form the UV-damaged DNA-binding protein complex (the UV-DDB complex). The UV-DDB complex may recognize UV-induced DNA damage and recruit proteins of the nucleotide excision repair pathway (the NER pathway) to initiate DNA repair. May function as the substrate recognition module for a DCX (DDB1-CUL4-X-box) E3 ubiquitin-protein ligase complex. In Oryza sativa subsp. japonica (Rice), this protein is DNA damage-binding protein 1.